A 265-amino-acid polypeptide reads, in one-letter code: U6 snRNA phosphodiesterase 1 (265 aa).

Positions 1–67 (MSAAPLVGYS…EGPVDDSAKH (67 aa)) are disordered. The segment covering 20 to 32 (AGARVRPGAEGRS) has biased composition (basic and acidic residues). The Proton acceptor role is filled by H120. 120–122 (HLS) provides a ligand contact to AMP. UMP contacts are provided by residues Q164, Y202, and 206-210 (SFHIS). AMP contacts are provided by residues Y202 and 204-210 (DPSFHIS). The Proton donor role is filled by H208.

The protein belongs to the 2H phosphoesterase superfamily. USB1 family. In terms of assembly, interacts with PLRG1, CDC5L and PRPF19.

The protein localises to the nucleus. It carries out the reaction a 3'-end uridylyl-uridine-RNA = a 3'-end 2',3'-cyclophospho-uridine-RNA + uridine. It catalyses the reaction a 3'-end uridylyl-adenosine-RNA = a 3'-end 2',3'-cyclophospho-uridine-RNA + adenosine. Functionally, 3'-5' RNA exonuclease that trims the 3' end of oligo(U) and oligo(A) tracts of the pre-U6 small nuclear RNA (snRNA) molecule, leading to the formation of a mature U6 snRNA 3' end-terminated with a 2',3'-cyclic phosphate. Participates in the U6 snRNA 3' end processing that prevents U6 snRNA degradation. In addition also removes uridines from the 3' end of U6atac snRNA and possibly the vault RNA VTRNA1-1. This chain is U6 snRNA phosphodiesterase 1, found in Bos taurus (Bovine).